Consider the following 118-residue polypeptide: MTVQNEPSAKTHGVILTEAAAAKAKSLLDQEGRDDLALRIAVQPGGCAGLRYNLFFDDRTLDGDQTAEFGGVRLIVDRMSAPYVEGASIDFVDTIEKQGFTIDNPNATGSCACGDSFN.

Belongs to the HesB/IscA family.

In Mycobacterium tuberculosis (strain CDC 1551 / Oshkosh), this protein is Protein MT2260.